Reading from the N-terminus, the 1412-residue chain is DNA-directed RNA polymerase subunit beta' (1412 aa).

3 residues coordinate Mg(2+): D543, D545, and D547. C1017, C1092, C1099, and C1102 together coordinate Zn(2+).

This sequence belongs to the RNA polymerase beta' chain family. As to quaternary structure, the RNAP catalytic core consists of 2 alpha, 1 beta, 1 beta' and 1 omega subunit. When a sigma factor is associated with the core the holoenzyme is formed, which can initiate transcription. Mg(2+) serves as cofactor. It depends on Zn(2+) as a cofactor.

The enzyme catalyses RNA(n) + a ribonucleoside 5'-triphosphate = RNA(n+1) + diphosphate. In terms of biological role, DNA-dependent RNA polymerase catalyzes the transcription of DNA into RNA using the four ribonucleoside triphosphates as substrates. This is DNA-directed RNA polymerase subunit beta' from Mesomycoplasma hyopneumoniae (strain 7448) (Mycoplasma hyopneumoniae).